Consider the following 178-residue polypeptide: Meiotically up-regulated gene 95 protein (178 aa).

Over 1 to 12 the chain is Cytoplasmic; sequence MNLFVYIAQNPT. A helical; Signal-anchor for type II membrane protein transmembrane segment spans residues 13–30; the sequence is LTKWFFCCVCTILTMPFF. The Lumenal segment spans residues 31–178; it reads KKPYRKRGIS…ESIEKPENDN (148 aa).

It localises to the endoplasmic reticulum membrane. In terms of biological role, has a role in meiosis. This is Meiotically up-regulated gene 95 protein (mug95) from Schizosaccharomyces pombe (strain 972 / ATCC 24843) (Fission yeast).